The primary structure comprises 264 residues: MGLLSVDLLITLQILPGFFSNCLFLALYDSVVLVKHVLLQLNRSKSSHGQWRRMLTPEGLRCVWNSFLLDAYKQVKLGGDAPNSNVIHVTDKNSSSGKPGTPCHLLDFASSERPLVVNFGSATUPPFISQLPAFSKMVEEFSAVADFLLVYIDEAHPSDGWAAPGISSYEVKKHRNQEDRCAAANKLLEQYSLPPQCQVVADCMDNNTNAAYGVSFERVCIVQRQKIVYLGGKGPFFYNLQEVRQWLELTFGKKAESGQTGTEK.

Topologically, residues 1-7 are lumenal; the sequence is MGLLSVD. A helical; Signal-anchor for type III membrane protein membrane pass occupies residues 8–28; that stretch reads LLITLQILPGFFSNCLFLALY. The Cytoplasmic portion of the chain corresponds to 29–264; that stretch reads DSVVLVKHVL…AESGQTGTEK (236 aa). Sec124 is a catalytic residue. A non-standard amino acid (selenocysteine) is located at residue Sec124.

It belongs to the iodothyronine deiodinase family. As to quaternary structure, predominantly monomer. Can form homodimers but homodimerization is not essential for enzyme activity. High levels seen in the metamorphosing tail.

The protein localises to the endoplasmic reticulum membrane. The enzyme catalyses 3,3',5-triiodo-L-thyronine + iodide + A + H(+) = L-thyroxine + AH2. It catalyses the reaction 3,3'-diiodo-L-thyronine + iodide + A + H(+) = 3,3',5'-triiodo-L-thyronine + AH2. The catalysed reaction is 3'-iodo-L-thyronine + iodide + A + H(+) = 3',5'-diiodo-L-thyronine + AH2. It carries out the reaction 3,3'-diiodothyronamine + iodide + A + H(+) = 3,3',5'-triiodothyronamine + AH2. The enzyme catalyses 3'-iodothyronamine + iodide + A + H(+) = 3',5'-diiodothyronamine + AH2. With respect to regulation, not inhibited by N(6)-propylthiouracil. Plays a crucial role in the metabolism of thyroid hormones (TH) and has specific roles in TH activation and inactivation by deiodination. Catalyzes the deiodination of L-thyroxine (T4) to 3,5,3'-triiodothyronine (T3) and 3',5'-diiodothyronine (3',5'-T2) to 3'-monoiodothyronine (3'-T1) via outer-ring deiodination (ORD). Catalyzes the deiodination of 3,3',5'-triiodothyronine (rT3) to 3,3'-diiodothyronine (3,3'-T2) via ORD. Catalyzes the phenolic ring deiodinations of 3,3',5'-triiodothyronamine and 3',5'- diiodothyronamine. The chain is Type II iodothyronine deiodinase (dio2) from Aquarana catesbeiana (American bullfrog).